A 499-amino-acid chain; its full sequence is Ribose import ATP-binding protein RbsA 1 (499 aa).

ABC transporter domains are found at residues 5 to 240 (LEMR…GRSI) and 249 to 494 (TEPG…TAGS). 37–44 (GENGAGKS) is a binding site for ATP.

It belongs to the ABC transporter superfamily. Ribose importer (TC 3.A.1.2.1) family. As to quaternary structure, the complex is composed of an ATP-binding protein (RbsA), two transmembrane proteins (RbsC) and a solute-binding protein (RbsB).

The protein resides in the cell membrane. It carries out the reaction D-ribose(out) + ATP + H2O = D-ribose(in) + ADP + phosphate + H(+). Functionally, part of the ABC transporter complex RbsABC involved in ribose import. Responsible for energy coupling to the transport system. This is Ribose import ATP-binding protein RbsA 1 from Rubrobacter xylanophilus (strain DSM 9941 / JCM 11954 / NBRC 16129 / PRD-1).